We begin with the raw amino-acid sequence, 59 residues long: Potassium channel toxin alpha-KTx 3.5 (59 aa).

An N-terminal signal peptide occupies residues 1-22; it reads MKVFSAVLIILFVCSMIIGINA. Cystine bridges form between cysteine 29/cysteine 49, cysteine 35/cysteine 54, and cysteine 39/cysteine 56. The interval 47–54 is interaction with Ca(2+)-activated K(+) channels; it reads GKCMNGKC.

It belongs to the short scorpion toxin superfamily. Potassium channel inhibitor family. Alpha-KTx 03 subfamily. As to expression, expressed by the venom gland.

It localises to the secreted. Has also been shown to inhibit with high potency Kv1.3/KCNA3 and with low potency Kv1.1/KCNA1 and Kv1.2/KCNA2 voltage-gated potassium channels. Also binds and inhibits the molluscan calcium-activated potassium channels KCa (Kd=135 nM). The chain is Potassium channel toxin alpha-KTx 3.5 (KTX2) from Androctonus australis (Sahara scorpion).